Consider the following 85-residue polypeptide: N.vectensis toxin 1 5 (85 aa).

Residues 1-20 (MASFKIVIVCLALLVAVACA) form the signal peptide. Residues 21–36 (RRRDMMSDDELDFHLS) constitute a propeptide that is removed on maturation. Intrachain disulfides connect Cys-42-Cys-82, Cys-44-Cys-72, and Cys-65-Cys-83.

This sequence belongs to the sea anemone sodium channel inhibitory toxin family. Type II subfamily. As to expression, expressed in ectodermal glands and in clumps outside of the extodermal layer. Is not expressed in nematocytes. In adult female tissues, shows similar expression levels in mesenteries (gametes-producing tissue), tentacles, pharynx and physa.

The protein localises to the secreted. Functionally, binds to site 3 of voltage-gated sodium channels and inhibits the inactivation process. Is highly active on DmNav1/TipE (drosophila) and is only extremely weakly active on rat Nav1.4-beta-1/SCN4A-SCN1B, and on human Nav1.5-beta-1/SCN5A-beta-1. This reveals high specificity for arthropod over mammalian channels. In vivo, when released into the medium, this recombinant toxin induces impaired swimming, paralysis and death of the crustacean A.nauplii within several hours. Also causes paralysis of cherry shrimps immediately after injection at very low doses. Its effect on zebrafish (D.rerio) larvae is also rapid, since it induces tail twitching accompanied by impaired swimming after 20 minutes and complete paralysis within 45 minutes. It has also been observed to cause death of zebrafish larvae within 1 hour. This is N.vectensis toxin 1 5 from Nematostella vectensis (Starlet sea anemone).